Here is a 293-residue protein sequence, read N- to C-terminus: 33 kDa chaperonin (293 aa).

Disulfide bonds link Cys237–Cys239 and Cys271–Cys274.

It belongs to the HSP33 family. Under oxidizing conditions two disulfide bonds are formed involving the reactive cysteines. Under reducing conditions zinc is bound to the reactive cysteines and the protein is inactive.

The protein localises to the cytoplasm. Redox regulated molecular chaperone. Protects both thermally unfolding and oxidatively damaged proteins from irreversible aggregation. Plays an important role in the bacterial defense system toward oxidative stress. The chain is 33 kDa chaperonin from Haemophilus influenzae (strain 86-028NP).